Consider the following 377-residue polypeptide: N-acetyldiaminopimelate deacetylase (377 aa).

D70 is an active-site residue. E129 functions as the Proton acceptor in the catalytic mechanism.

It belongs to the peptidase M20A family. N-acetyldiaminopimelate deacetylase subfamily.

It carries out the reaction N-acetyl-(2S,6S)-2,6-diaminopimelate + H2O = (2S,6S)-2,6-diaminopimelate + acetate. It participates in amino-acid biosynthesis; L-lysine biosynthesis via DAP pathway; LL-2,6-diaminopimelate from (S)-tetrahydrodipicolinate (acetylase route): step 3/3. Its function is as follows. Catalyzes the conversion of N-acetyl-diaminopimelate to diaminopimelate and acetate. The sequence is that of N-acetyldiaminopimelate deacetylase from Streptococcus thermophilus (strain ATCC BAA-491 / LMD-9).